Here is a 105-residue protein sequence, read N- to C-terminus: Large ribosomal subunit protein uL24 (105 aa).

Belongs to the universal ribosomal protein uL24 family. In terms of assembly, part of the 50S ribosomal subunit.

Its function is as follows. One of two assembly initiator proteins, it binds directly to the 5'-end of the 23S rRNA, where it nucleates assembly of the 50S subunit. In terms of biological role, one of the proteins that surrounds the polypeptide exit tunnel on the outside of the subunit. In Beijerinckia indica subsp. indica (strain ATCC 9039 / DSM 1715 / NCIMB 8712), this protein is Large ribosomal subunit protein uL24.